The following is a 225-amino-acid chain: Biosynthetic peptidoglycan transglycosylase (225 aa).

Residues 8–28 traverse the membrane as a helical segment; the sequence is VLLIFIGAILFIQLWIFSSLV.

It belongs to the glycosyltransferase 51 family.

It localises to the cell inner membrane. The enzyme catalyses [GlcNAc-(1-&gt;4)-Mur2Ac(oyl-L-Ala-gamma-D-Glu-L-Lys-D-Ala-D-Ala)](n)-di-trans,octa-cis-undecaprenyl diphosphate + beta-D-GlcNAc-(1-&gt;4)-Mur2Ac(oyl-L-Ala-gamma-D-Glu-L-Lys-D-Ala-D-Ala)-di-trans,octa-cis-undecaprenyl diphosphate = [GlcNAc-(1-&gt;4)-Mur2Ac(oyl-L-Ala-gamma-D-Glu-L-Lys-D-Ala-D-Ala)](n+1)-di-trans,octa-cis-undecaprenyl diphosphate + di-trans,octa-cis-undecaprenyl diphosphate + H(+). Its pathway is cell wall biogenesis; peptidoglycan biosynthesis. In terms of biological role, peptidoglycan polymerase that catalyzes glycan chain elongation from lipid-linked precursors. The protein is Biosynthetic peptidoglycan transglycosylase of Acinetobacter baumannii (strain ATCC 17978 / DSM 105126 / CIP 53.77 / LMG 1025 / NCDC KC755 / 5377).